A 463-amino-acid polypeptide reads, in one-letter code: Probable Xaa-Pro aminopeptidase pepP (463 aa).

The Mn(2+) site is built by Asp259, Asp270, Glu393, and Glu433.

The protein belongs to the peptidase M24B family. Requires Mn(2+) as cofactor.

It catalyses the reaction Release of any N-terminal amino acid, including proline, that is linked to proline, even from a dipeptide or tripeptide.. Catalyzes the removal of a penultimate prolyl residue from the N-termini of peptides. This is Probable Xaa-Pro aminopeptidase pepP (pepP) from Pyrenophora tritici-repentis (strain Pt-1C-BFP) (Wheat tan spot fungus).